The chain runs to 350 residues: Probable flap endonuclease 1 homolog (350 aa).

The tract at residues Met1–Thr95 is N-domain. Residue Asp34 participates in Mg(2+) binding. Position 61 (Arg61) interacts with DNA. 5 residues coordinate Mg(2+): Asp77, Glu130, Glu132, Asp151, and Asp153. The tract at residues Asn110–His223 is I-domain. Glu130 serves as a coordination point for DNA. DNA-binding residues include Gly201 and Asp203. Asp203 lines the Mg(2+) pocket. An interaction with PCNA region spans residues Arg317 to Phe325.

It belongs to the XPG/RAD2 endonuclease family. FEN1 subfamily. As to quaternary structure, interacts with PCNA. Three molecules of fen1 bind to one PCNA trimer with each molecule binding to one PCNA monomer. PCNA stimulates the nuclease activity without altering cleavage specificity. It depends on Mg(2+) as a cofactor. In terms of processing, phosphorylated. Phosphorylation upon DNA damage induces relocalization to the nuclear plasma.

The protein localises to the nucleus. It localises to the nucleolus. Its subcellular location is the nucleoplasm. It is found in the mitochondrion. In terms of biological role, structure-specific nuclease with 5'-flap endonuclease and 5'-3' exonuclease activities involved in DNA replication and repair. During DNA replication, cleaves the 5'-overhanging flap structure that is generated by displacement synthesis when DNA polymerase encounters the 5'-end of a downstream Okazaki fragment. It enters the flap from the 5'-end and then tracks to cleave the flap base, leaving a nick for ligation. Also involved in the long patch base excision repair (LP-BER) pathway, by cleaving within the apurinic/apyrimidinic (AP) site-terminated flap. Acts as a genome stabilization factor that prevents flaps from equilibrating into structures that lead to duplications and deletions. Also possesses 5'-3' exonuclease activity on nicked or gapped double-stranded DNA, and exhibits RNase H activity. Also involved in replication and repair of rDNA and in repairing mitochondrial DNA. The protein is Probable flap endonuclease 1 homolog of Danio rerio (Zebrafish).